The following is a 234-amino-acid chain: Carboxy-S-adenosyl-L-methionine synthase (234 aa).

Residues Tyr35, 60–62 (GSS), 83–84 (DN), Asn124, and Arg191 each bind S-adenosyl-L-methionine.

Belongs to the class I-like SAM-binding methyltransferase superfamily. Cx-SAM synthase family. As to quaternary structure, homodimer.

It catalyses the reaction prephenate + S-adenosyl-L-methionine = carboxy-S-adenosyl-L-methionine + 3-phenylpyruvate + H2O. In terms of biological role, catalyzes the conversion of S-adenosyl-L-methionine (SAM) to carboxy-S-adenosyl-L-methionine (Cx-SAM). The chain is Carboxy-S-adenosyl-L-methionine synthase from Nautilia profundicola (strain ATCC BAA-1463 / DSM 18972 / AmH).